Consider the following 178-residue polypeptide: Nicotinamide-nucleotide adenylyltransferase (178 aa).

It belongs to the archaeal NMN adenylyltransferase family.

Its subcellular location is the cytoplasm. It catalyses the reaction beta-nicotinamide D-ribonucleotide + ATP + H(+) = diphosphate + NAD(+). The protein operates within cofactor biosynthesis; NAD(+) biosynthesis; NAD(+) from nicotinamide D-ribonucleotide: step 1/1. In Pyrobaculum neutrophilum (strain DSM 2338 / JCM 9278 / NBRC 100436 / V24Sta) (Thermoproteus neutrophilus), this protein is Nicotinamide-nucleotide adenylyltransferase.